Consider the following 156-residue polypeptide: Small ribosomal subunit protein uS7 (156 aa).

Belongs to the universal ribosomal protein uS7 family. As to quaternary structure, part of the 30S ribosomal subunit. Contacts proteins S9 and S11.

Its function is as follows. One of the primary rRNA binding proteins, it binds directly to 16S rRNA where it nucleates assembly of the head domain of the 30S subunit. Is located at the subunit interface close to the decoding center, probably blocks exit of the E-site tRNA. This is Small ribosomal subunit protein uS7 from Shewanella sp. (strain MR-7).